Reading from the N-terminus, the 504-residue chain is Cytochrome P450 monooxygenase gsfF (504 aa).

A signal peptide spans Met-1–Gly-16. 2 N-linked (GlcNAc...) asparagine glycosylation sites follow: Asn-97 and Asn-150. Cys-450 serves as a coordination point for heme.

It belongs to the cytochrome P450 family. Requires heme as cofactor.

The catalysed reaction is griseophenone B + reduced [NADPH--hemoprotein reductase] + O2 + H(+) = desmethyl-dehydrogriseofulvin + oxidized [NADPH--hemoprotein reductase] + 2 H2O. It functions in the pathway secondary metabolite biosynthesis; terpenoid biosynthesis. In terms of biological role, cytochrome P450 monooxygenase; part of the gene cluster that mediates the biosynthesis of griseofulvin, an important antifungal drug that has been in use for a long time for treating dermatophyte infections. The first step of the pathway is the formation of the heptaketide backbone by gsfA which is initiated by priming with acetyl-CoA, followed by sequential condensations of 6 malonyl-CoA units. The resulting benzophenone can undergo a spontaneous dehydration to form norlichexanthone. However, the true precursor for the griseofulvin biosynthesis is not norlichexanthone, but the heptaketide benzophenone that is O-methylated at 3-OH by gsfB to produce griseophenone D which is further methylated at 9-OH by gsfC to yield griseophenone C. Griseophenone C is then substrate of halogenase gsfI which is responsible for the regio-specific chlorination at the C13 position to form griseophenone B. The cytochrome P450 gsfF catalyzes the coupling of orcinol and phloroglucinol rings in griseophenone B to form desmethyl-dehydrogriseofulvin A which is further methylated at 5-OH by gsfD to yield dehydrogriseofulvin. Finally, gsfE performs stereospecific reduction of enone 18 of dehydrogriseofulvin to afford the final product griseofulvin. This chain is Cytochrome P450 monooxygenase gsfF, found in Penicillium aethiopicum.